Here is a 1106-residue protein sequence, read N- to C-terminus: Zinc finger protein GLI1 (1106 aa).

The segment at 1-20 (MFNSMTPPPISSYGEPCCLR) is SNAG domain. Residues 120–124 (SYGHL) form an interaction with SUFU region. 5 consecutive C2H2-type zinc fingers follow at residues 235–260 (TDCRWDGCSQEFDSQEQLVHHINSEH), 268–295 (FVCHWGGCSRELRPFKAQYMLVVHMRRH), 301–325 (HKCTFEGCRKSYSRLENLKTHLRSH), 331–356 (YMCEHEGCSKAFSNASDRAKHQNRTH), and 362–387 (YVCKLPGCTKRYTDPSSLRKHVKTVH). Residues 283–291 (KAQYMLVVH) are interaction with DNA. Interaction with DNA stretches follow at residues 345 to 350 (ASDRAK) and 375 to 381 (DPSSLRK). Disordered regions lie at residues 375–485 (DPSS…DEGP), 516–580 (GLKL…SLPG), 732–792 (YGGP…LYPG), 817–889 (EQGC…PTHS), and 914–942 (GREDAPAQEPSYQSPKFLGGSQVSPSRAK). Positions 413 to 428 (EPKREREGGPIREESR) are enriched in basic and acidic residues. Positions 442 to 463 (PGAQSSCSSDHSPAGSAANTDS) are enriched in polar residues. Lys518 carries the N6-acetyllysine modification. 2 stretches are compositionally biased toward low complexity: residues 544 to 560 (SSSSSISSAYTVSRRSS) and 737 to 753 (GAAAEPYGARGPGSLPL). The segment covering 754-766 (GPGPPTNYGPNPC) has biased composition (pro residues). Polar residues predominate over residues 768–779 (QQASYPDPTQET). A Glycyl lysine isopeptide (Lys-Gly) (interchain with G-Cter in SUMO2) cross-link involves residue Lys1003. The interval 1054 to 1087 (DEPQGLSPPPSHDQRGSSGHTPPPSGPPNMAVGN) is disordered.

It belongs to the GLI C2H2-type zinc-finger protein family. As to quaternary structure, interacts with KIF7. Interacts with STK36. Interacts with ZIC1; the interaction enhances transcription activation. Interacts with SUFU; this inhibits transcriptional activation by GLI1. Phosphorylated in vitro by ULK3. Post-translationally, acetylation at Lys-518 down-regulates transcriptional activity. Deacetylated by HDAC1. In terms of processing, ubiquitinated by the CRL2(FEM1B) complex, suppressing GLI1 transcriptional activator activity. As to expression, detected in testis (at protein level). Testis, myometrium and fallopian tube. Also expressed in the brain with highest expression in the cerebellum, optic nerve and olfactory tract. Isoform 1 is detected in brain, spleen, pancreas, liver, kidney and placenta; isoform 2 is not detectable in these tissues.

Its subcellular location is the cytoplasm. It is found in the nucleus. In terms of biological role, acts as a transcriptional activator. Binds to the DNA consensus sequence 5'-GACCACCCA-3'. Regulates the transcription of specific genes during normal development. Plays a role in craniofacial development and digital development, as well as development of the central nervous system and gastrointestinal tract. Mediates SHH signaling. Plays a role in cell proliferation and differentiation via its role in SHH signaling. Acts as a transcriptional activator, but activates a different set of genes than isoform 1. Activates expression of CD24, unlike isoform 1. Mediates SHH signaling. Promotes cancer cell migration. The sequence is that of Zinc finger protein GLI1 (GLI1) from Homo sapiens (Human).